Consider the following 71-residue polypeptide: Large ribosomal subunit protein bL28 (71 aa).

It belongs to the bacterial ribosomal protein bL28 family.

In Finegoldia magna (strain ATCC 29328 / DSM 20472 / WAL 2508) (Peptostreptococcus magnus), this protein is Large ribosomal subunit protein bL28.